The sequence spans 185 residues: Ribosome-recycling factor (185 aa).

The protein belongs to the RRF family.

The protein resides in the cytoplasm. Functionally, responsible for the release of ribosomes from messenger RNA at the termination of protein biosynthesis. May increase the efficiency of translation by recycling ribosomes from one round of translation to another. In Yersinia enterocolitica serotype O:8 / biotype 1B (strain NCTC 13174 / 8081), this protein is Ribosome-recycling factor.